We begin with the raw amino-acid sequence, 160 residues long: DNA polymerase delta subunit 4 (160 aa).

The disordered stretch occupies residues 1–48; sequence MKKRTTQAKKSGQNTNIRDVFPHVVRSNSSQSHIGKKVSSEQSPTPDV. Residues 8–17 are compositionally biased toward polar residues; that stretch reads AKKSGQNTNI.

This sequence belongs to the DNA polymerase delta subunit 4 family. As to quaternary structure, heterotetramer that consist of the pol3, cdc1, cdc27 and cdm1 subunits. Interacts with cdc1 and pol3.

The protein localises to the nucleus. Functionally, appears to have a role in the stabilization of the DNA polymerase delta complex. The chain is DNA polymerase delta subunit 4 (cdm1) from Schizosaccharomyces pombe (strain 972 / ATCC 24843) (Fission yeast).